The following is a 157-amino-acid chain: Deoxyuridine 5'-triphosphate nucleotidohydrolase (157 aa).

Residues 73–75 (RSG), asparagine 86, and 90–92 (TID) each bind substrate.

This sequence belongs to the dUTPase family. Mg(2+) serves as cofactor.

It catalyses the reaction dUTP + H2O = dUMP + diphosphate + H(+). It functions in the pathway pyrimidine metabolism; dUMP biosynthesis; dUMP from dCTP (dUTP route): step 2/2. Functionally, this enzyme is involved in nucleotide metabolism: it produces dUMP, the immediate precursor of thymidine nucleotides and it decreases the intracellular concentration of dUTP so that uracil cannot be incorporated into DNA. The chain is Deoxyuridine 5'-triphosphate nucleotidohydrolase from Azorhizobium caulinodans (strain ATCC 43989 / DSM 5975 / JCM 20966 / LMG 6465 / NBRC 14845 / NCIMB 13405 / ORS 571).